We begin with the raw amino-acid sequence, 340 residues long: 4-dimethylallyltryptophan N-methyltransferase easF (340 aa).

The protein belongs to the methyltransferase superfamily. In terms of assembly, homodimer.

It carries out the reaction 4-(3-methylbut-2-enyl)-L-tryptophan + S-adenosyl-L-methionine = 4-(3-methylbut-2-enyl)-L-abrine + S-adenosyl-L-homocysteine + H(+). It functions in the pathway alkaloid biosynthesis; ergot alkaloid biosynthesis. Functionally, 4-dimethylallyltryptophan N-methyltransferase; part of the gene cluster that mediates the biosynthesis of fungal ergot alkaloid. DmaW catalyzes the first step of ergot alkaloid biosynthesis by condensing dimethylallyl diphosphate (DMAP) and tryptophan to form 4-dimethylallyl-L-tryptophan. The second step is catalyzed by the methyltransferase easF that methylates 4-dimethylallyl-L-tryptophan in the presence of S-adenosyl-L-methionine, resulting in the formation of 4-dimethylallyl-L-abrine. The catalase easC and the FAD-dependent oxidoreductase easE then transform 4-dimethylallyl-L-abrine to chanoclavine-I which is further oxidized by easD in the presence of NAD(+), resulting in the formation of chanoclavine-I aldehyde. Chanoclavine-I aldehyde is the precursor of ergoamides and ergopeptines in Clavicipitaceae, and clavine-type alcaloids such as fumiclavine in Trichocomaceae. However, the metabolites downstream of chanoclavine-I aldehyde in Arthrodermataceae have not been identified yet. This is 4-dimethylallyltryptophan N-methyltransferase easF from Arthroderma benhamiae (strain ATCC MYA-4681 / CBS 112371) (Trichophyton mentagrophytes).